The sequence spans 463 residues: Gamma-aminobutyric acid receptor subunit alpha-5 (463 aa).

Positions 1 to 25 (MDNGMLSRFIMTQTLLVFCISMTLS) are cleaved as a signal peptide. Over 26–260 (SHFGFSQMPT…FHLKRKIGYF (235 aa)) the chain is Extracellular. An N-linked (GlcNAc...) asparagine glycan is attached at N45. R101 provides a ligand contact to 4-aminobutanoate. N145 carries an N-linked (GlcNAc...) asparagine glycan. 4-aminobutanoate is bound at residue T164. C173 and C187 are oxidised to a cystine. N-linked (GlcNAc...) asparagine glycans are attached at residues N207 and N236. 3 consecutive transmembrane segments (helical) span residues 261-281 (VIQTYLPCIMTVILSQVSFWL), 287-308 (PARTVFGVTTVLTMTTLSISAR), and 319-340 (AMDWFIAVCYAFVFSALIEFAT). Topologically, residues 341–428 (VNYFTKRGWA…TYNSISKIDK (88 aa)) are cytoplasmic. K355 is covalently cross-linked (Glycyl lysine isopeptide (Lys-Gly) (interchain with G-Cter in ubiquitin)). Residues 387-408 (PNIPKEQPPAGTANAPTVSIKA) form a disordered region. Residues 429–449 (MSRIVFPILFGTFNLVYWATY) traverse the membrane as a helical segment.

Belongs to the ligand-gated ion channel (TC 1.A.9) family. Gamma-aminobutyric acid receptor (TC 1.A.9.5) subfamily. GABRA5 sub-subfamily. In terms of assembly, heteropentamer, formed by a combination of alpha (GABRA1-6), beta (GABRB1-3), gamma (GABRG1-3), delta (GABRD), epsilon (GABRE), rho (GABRR1-3), pi (GABRP) and theta (GABRQ) chains, each subunit exhibiting distinct physiological and pharmacological properties. In terms of tissue distribution, expressed in brain, in hippocampal pyramidal neurons.

The protein localises to the postsynaptic cell membrane. Its subcellular location is the cell membrane. The catalysed reaction is chloride(in) = chloride(out). Functionally, alpha subunit of the heteropentameric ligand-gated chloride channel gated by gamma-aminobutyric acid (GABA), a major inhibitory neurotransmitter in the brain. GABA-gated chloride channels, also named GABA(A) receptors (GABAAR), consist of five subunits arranged around a central pore and contain GABA active binding site(s) located at the alpha and beta subunit interface(s). When activated by GABA, GABAARs selectively allow the flow of chloride anions across the cell membrane down their electrochemical gradient. GABAARs containing alpha-5/GABRA5 are mainly extrasynaptic and contribute to the tonic GABAergic inhibition of the hippocampus. Extrasynaptic alpha-5-containing GABAARs in CA1 pyramidal neurons play a role in learning and memory processes. The chain is Gamma-aminobutyric acid receptor subunit alpha-5 from Mus musculus (Mouse).